A 265-amino-acid polypeptide reads, in one-letter code: MPADPGPEVGSGWPGLLMSCLKGPHVILKMEAMKIVHPEKFPELPAATPCFPPAPRPTPTLAPKRAWPSDTEIIVNQACGGDMPTLEGASHTPPLPRRPRKGSSELGFPRVAPVDEVIVNQYVIRPGPTASAPSSSGPVIAGEPLECPTCGHTYNVTQRRPRVLSCLHSVCEQCLQILYESCPKYKFISCPTCHRETVLFTDYGLAALAVNTSILSRLPPEALTAPSGGQWGGESEGSCYQTFRQYCGAACTCHVRNPLSACSIM.

Residues 83 to 106 (MPTLEGASHTPPLPRRPRKGSSEL) are disordered. The residue at position 103 (S103) is a Phosphoserine. The RING-type zinc finger occupies 147-194 (CPTCGHTYNVTQRRPRVLSCLHSVCEQCLQILYESCPKYKFISCPTCH).

In Mus musculus (Mouse), this protein is RING finger protein 208 (Rnf208).